A 107-amino-acid chain; its full sequence is UPF0060 membrane protein RPD_3084 (107 aa).

4 helical membrane-spanning segments follow: residues 5-25, 31-51, 59-79, and 85-105; these read IIYV…WGWL, VWWL…LTLV, AYAS…WSVE, and RWDV…LWGP.

The protein belongs to the UPF0060 family.

It is found in the cell inner membrane. The sequence is that of UPF0060 membrane protein RPD_3084 from Rhodopseudomonas palustris (strain BisB5).